The chain runs to 775 residues: Major facilitator superfamily domain-containing protein 6 (775 aa).

Thr11 bears the Phosphothreonine mark. Positions 28 to 47 (NGICREPEPPSNETPSSTET) are disordered. Residues 38-47 (SNETPSSTET) are compositionally biased toward low complexity. 12 helical membrane passes run 74-94 (VFYF…PVYY), 106-126 (LLVG…GVVA), 133-153 (KIVL…IGFV), 289-309 (AIFL…ASSV), 338-358 (WGLA…DVLI), 372-392 (QIVF…ATQF), 453-473 (VLFV…FLYW), 482-502 (TTLF…AYFF), 510-530 (IGHI…YIYI), 547-567 (GVTH…AVPP), 582-602 (LGLG…YFGA), and 608-628 (GIGM…WLAV).

It belongs to the major facilitator superfamily. MFSD6 family.

Its subcellular location is the membrane. Functionally, MHC class I receptor. Binds only to H-2 class I histocompatibility antigen, K-D alpha chain (H-2K(D)). The sequence is that of Major facilitator superfamily domain-containing protein 6 (Mfsd6) from Mus musculus (Mouse).